The primary structure comprises 409 residues: Pentatricopeptide repeat-containing protein At5g09450, mitochondrial (409 aa).

The N-terminal 38 residues, 1–38, are a transit peptide targeting the mitochondrion; the sequence is MATRSLFHSLRCRLTNNGVLGSNFIRNAESSRFSKSYN. PPR repeat units lie at residues 155–189, 191–225, 226–256, 262–296, 298–332, and 333–367; these read TAETYTSLLHAYAASKQTERAEALFKRIIESDSLT, GAITYNEMMTLYMSVGQVEKVPEVIEVLKQKKVSP, DIFTYNLWLSSCAATFNIDELRKILEEMRHD, GWVRYIDLTSIYINSSRVTNAESTLPVEAEKSISQ, EWITYDFLMILHTGLGNKVMIDQIWKSLRNTNQIL, and SSRSYICVLSSYLMLGHLREAEEIIHQWKESKTTE.

The protein belongs to the PPR family. P subfamily.

It localises to the mitochondrion. This Arabidopsis thaliana (Mouse-ear cress) protein is Pentatricopeptide repeat-containing protein At5g09450, mitochondrial.